The chain runs to 286 residues: Bifunctional protein FolD (286 aa).

NADP(+) is bound by residues Gly165–Ser167 and Ser190.

Belongs to the tetrahydrofolate dehydrogenase/cyclohydrolase family. As to quaternary structure, homodimer.

It carries out the reaction (6R)-5,10-methylene-5,6,7,8-tetrahydrofolate + NADP(+) = (6R)-5,10-methenyltetrahydrofolate + NADPH. The enzyme catalyses (6R)-5,10-methenyltetrahydrofolate + H2O = (6R)-10-formyltetrahydrofolate + H(+). It participates in one-carbon metabolism; tetrahydrofolate interconversion. Functionally, catalyzes the oxidation of 5,10-methylenetetrahydrofolate to 5,10-methenyltetrahydrofolate and then the hydrolysis of 5,10-methenyltetrahydrofolate to 10-formyltetrahydrofolate. The sequence is that of Bifunctional protein FolD from Paraburkholderia phytofirmans (strain DSM 17436 / LMG 22146 / PsJN) (Burkholderia phytofirmans).